A 153-amino-acid polypeptide reads, in one-letter code: L-alanine exporter AlaE (153 aa).

The next 4 helical transmembrane spans lie at 16–36, 42–62, 86–106, and 114–134; these read VAMV…LSEM, LSSR…YGLY, LFAY…AIGA, and AVGS…YFLE.

Belongs to the AlaE exporter family.

Its subcellular location is the cell inner membrane. Functionally, exports L-alanine. In Musicola paradisiaca (strain Ech703) (Dickeya paradisiaca), this protein is L-alanine exporter AlaE.